Here is a 158-residue protein sequence, read N- to C-terminus: MAEASSLVGKLETEVEIKASAKKFHHMFTERPHHVSKATPDKIHGCELHEGDWGKVGSIVIWKYVHDGKLTVGKNKIEAVDPEKNLITFKVLEGDLMNEYKSFAFTLQVTPKQGESGSIAHWHLEYEKISEEVAHPETLLQFCVEISKEIDEHLLAEE.

N-acetylalanine is present on alanine 2.

This sequence belongs to the MLP family.

This chain is MLP-like protein 43 (MLP43), found in Arabidopsis thaliana (Mouse-ear cress).